The chain runs to 199 residues: Achaete-scute homolog 1 (199 aa).

The disordered stretch occupies residues proline 37–serine 56. Residues alanine 81–leucine 133 enclose the bHLH domain. Polar residues predominate over residues histidine 162–glutamate 179. Residues histidine 162 to glutamate 189 are disordered.

Efficient DNA binding requires dimerization with another bHLH protein. In terms of tissue distribution, neuronal precursor cells.

It is found in the nucleus. Its function is as follows. Transcription factor that plays a key role in neuronal differentiation: acts as a pioneer transcription factor, accessing closed chromatin to allow other factors to bind and activate neural pathways. Directly binds the E box motif (5'-CANNTG-3') on promoters and promotes transcription of neuronal genes. The combination of three transcription factors, ASCL1, POU3F2/BRN2 and MYT1L, is sufficient to reprogram fibroblasts and other somatic cells into induced neuronal (iN) cells in vitro. The chain is Achaete-scute homolog 1 (ascl1) from Xenopus laevis (African clawed frog).